Reading from the N-terminus, the 127-residue chain is Dual endothelin-1/VEGF signal peptide receptor (127 aa).

Residues Met1 to Ser65 are Extracellular-facing. The chain crosses the membrane as a helical span at residues Ile66–Ser84. Residues Lys85–His127 are Cytoplasmic-facing.

As to expression, widely expressed with higher levels in kidney and aorta.

The protein localises to the cell membrane. Dual receptor for both endothelin-1 and the signal sequence of vascular endothelial growth factor A. Does not act as a receptor for angiotensin-2. Does not bind the VEGFA mature protein. May play a role in angiogenesis with a significant role in cardiovascular and neural development. The protein is Dual endothelin-1/VEGF signal peptide receptor of Mus musculus (Mouse).